The sequence spans 259 residues: Aspartate/glutamate leucyltransferase (259 aa).

The protein belongs to the R-transferase family. Bpt subfamily.

It is found in the cytoplasm. The catalysed reaction is N-terminal L-glutamyl-[protein] + L-leucyl-tRNA(Leu) = N-terminal L-leucyl-L-glutamyl-[protein] + tRNA(Leu) + H(+). It catalyses the reaction N-terminal L-aspartyl-[protein] + L-leucyl-tRNA(Leu) = N-terminal L-leucyl-L-aspartyl-[protein] + tRNA(Leu) + H(+). Its function is as follows. Functions in the N-end rule pathway of protein degradation where it conjugates Leu from its aminoacyl-tRNA to the N-termini of proteins containing an N-terminal aspartate or glutamate. In Rhizobium meliloti (strain 1021) (Ensifer meliloti), this protein is Aspartate/glutamate leucyltransferase.